Reading from the N-terminus, the 346-residue chain is Glucose-6-phosphatase 3 (346 aa).

Over 1 to 25 the chain is Lumenal; that stretch reads MESTLSAGIMMAEALQNQLPGLENM. A helical membrane pass occupies residues 26–46; sequence WLWVTFLADPKNLFQFYFPAV. Topologically, residues 47–56 are cytoplasmic; sequence YYASRRLGIS. The chain crosses the membrane as a helical span at residues 57–77; it reads LFWIAFITEWLNLVFKWFLFG. The Lumenal portion of the chain corresponds to 78–115; sequence DRPFWWVHESGYSAQTPVQIHQFPSSCETGPGSPSGHC. Residue Arg-79 participates in substrate binding. His-114 acts as the Proton donor in catalysis. The chain crosses the membrane as a helical span at residues 116–135; sequence MITGAALWPVMIAISSQVAS. The Cytoplasmic segment spans residues 136–140; that stretch reads QTRSP. Residues 141–162 form a helical membrane-spanning segment; sequence WVRVIPGLAYCTFLLAVGLSRV. Position 161 (Arg-161) interacts with substrate. The Lumenal portion of the chain corresponds to 163-167; it reads FLLAH. His-167 serves as the catalytic Nucleophile. The helical transmembrane segment at 168–186 threads the bilayer; that stretch reads FPHQVLAGLLAGVILGWLL. At 187–197 the chain is on the cytoplasmic side; sequence SPRVPMERELS. A helical membrane pass occupies residues 198–218; it reads FYGLTALTLMLGASLMYWTLF. Over 219–254 the chain is Lumenal; it reads TLGLDLSWSINLASKWCDRPEWVLVDSRPFASLSRD. Residues 255–273 form a helical membrane-spanning segment; it reads SGSALGLGIALHTPCYAQI. Topologically, residues 274–283 are cytoplasmic; it reads RRVHLGNGQK. Residues 284–304 traverse the membrane as a helical segment; sequence IACFVLAMGLLVFLEWLGHPP. Residues 305 to 307 lie on the Lumenal side of the membrane; that stretch reads QIS. A helical membrane pass occupies residues 308-328; sequence LFYIFNFLKFTLWPCLVVALV. Residues 329–346 lie on the Cytoplasmic side of the membrane; sequence PWMVHTLSAQEAPPIRSS.

Belongs to the glucose-6-phosphatase family. In terms of tissue distribution, expressed in liver and kidney. It is the major glucose-6-phosphatase expressed in the small intestine.

The protein resides in the endoplasmic reticulum membrane. The catalysed reaction is D-glucose 6-phosphate + H2O = D-glucose + phosphate. It functions in the pathway carbohydrate biosynthesis; gluconeogenesis. Inhibited by vanadate. Its function is as follows. Hydrolyzes glucose-6-phosphate to glucose in the endoplasmic reticulum. May form with the glucose-6-phosphate transporter (SLC37A4/G6PT) a ubiquitously expressed complex responsible for glucose production through glycogenolysis and gluconeogenesis. Probably required for normal neutrophil function. This is Glucose-6-phosphatase 3 (G6pc3) from Rattus norvegicus (Rat).